Consider the following 441-residue polypeptide: Ribosomal protein uS12 methylthiotransferase RimO (441 aa).

The MTTase N-terminal domain occupies 5-116 (PTIAFTHLGC…IVDVMQRVEK (112 aa)). Residues Cys-14, Cys-50, Cys-79, Cys-154, Cys-158, and Cys-161 each contribute to the [4Fe-4S] cluster site. One can recognise a Radical SAM core domain in the interval 140–370 (TTSEGVAYVR…EVQQSISWQQ (231 aa)). A TRAM domain is found at 372–438 (QKLVGQLVDV…IYDLYGCLIS (67 aa)).

Belongs to the methylthiotransferase family. RimO subfamily. Requires [4Fe-4S] cluster as cofactor.

The protein localises to the cytoplasm. The catalysed reaction is L-aspartate(89)-[ribosomal protein uS12]-hydrogen + (sulfur carrier)-SH + AH2 + 2 S-adenosyl-L-methionine = 3-methylsulfanyl-L-aspartate(89)-[ribosomal protein uS12]-hydrogen + (sulfur carrier)-H + 5'-deoxyadenosine + L-methionine + A + S-adenosyl-L-homocysteine + 2 H(+). Catalyzes the methylthiolation of an aspartic acid residue of ribosomal protein uS12. The protein is Ribosomal protein uS12 methylthiotransferase RimO of Trichodesmium erythraeum (strain IMS101).